The chain runs to 792 residues: Phenylalanine--tRNA ligase beta subunit (792 aa).

Residues 39–147 (ARTLEKVVVG…ADAPIGKNIQ (109 aa)) form the tRNA-binding domain. Positions 400–475 (PKIPRIILRP…HLYGYDRIPQ (76 aa)) constitute a B5 domain. Asp453, Asp459, Glu462, and Glu463 together coordinate Mg(2+). One can recognise an FDX-ACB domain in the interval 697-791 (SKFPSIRRDI…LERKFNAKLR (95 aa)).

It belongs to the phenylalanyl-tRNA synthetase beta subunit family. Type 1 subfamily. As to quaternary structure, tetramer of two alpha and two beta subunits. Mg(2+) serves as cofactor.

It localises to the cytoplasm. The enzyme catalyses tRNA(Phe) + L-phenylalanine + ATP = L-phenylalanyl-tRNA(Phe) + AMP + diphosphate + H(+). In Coxiella burnetii (strain RSA 493 / Nine Mile phase I), this protein is Phenylalanine--tRNA ligase beta subunit.